The primary structure comprises 368 residues: 2-oxoglutarate-dependent dioxygenase frbJ (368 aa).

The region spanning 171–277 (QQHKLKIVKY…RYSIPFFQGV (107 aa)) is the Fe2OG dioxygenase domain. Fe cation is bound by residues histidine 198, aspartate 200, and histidine 256. A 2-oxoglutarate-binding site is contributed by arginine 268.

This sequence belongs to the iron/ascorbate-dependent oxidoreductase family.

It participates in antifungal biosynthesis. Its function is as follows. 2-oxoglutarate-dependent dioxygenase; part of the gene cluster that mediates the biosynthesis of the antifungal antibiotic FR901469, an inhibitor of beta-1,3-glucansynthase, exerting antifungal activity against the pathogenes Candida albicans and Aspergillus fumigatus. FR901469 is a cyclic depsipeptide containing 12 amino acid residues and a fatty acid chain. The NRPS frbI contains 12 modules responsible for the formation of the depsipeptide backbone which is denoted as Acyl-Thr-Ala-Tyr-Val-4OHPro-Thr-Thr-3OHPro-threo3OHGln-Gly-Thr-Orn-OH (C71H116N14O23). The PKS frbB is probably involved in the production of the hydrocarbon chain, and the acyl-CoA ligase frbC might be involved in the transport of the chain to the peptide ptoduct of frbI. Because FR901469 contains 3 hydroxylated amino acid residues, the 3 oxygenases frbA, frbH, and frbJ might be participating in amino acid hydroxylation. As no thioesterase domains were detected in frbI or frbB, the thioesterases frbD and frbE may instead release and cyclize the products of the NRPS and PKS, respectively. The protein is 2-oxoglutarate-dependent dioxygenase frbJ of Dothideomycetidae sp. (strain 11243) (Fungal sp. (strain No.11243)).